Consider the following 136-residue polypeptide: Nucleoside diphosphate kinase (136 aa).

The ATP site is built by Lys-10, Phe-58, Arg-86, Thr-92, Arg-104, and Asn-114. His-117 functions as the Pros-phosphohistidine intermediate in the catalytic mechanism.

This sequence belongs to the NDK family. Homohexamer. It depends on Mg(2+) as a cofactor.

The protein localises to the cytoplasm. The enzyme catalyses a 2'-deoxyribonucleoside 5'-diphosphate + ATP = a 2'-deoxyribonucleoside 5'-triphosphate + ADP. It catalyses the reaction a ribonucleoside 5'-diphosphate + ATP = a ribonucleoside 5'-triphosphate + ADP. Major role in the synthesis of nucleoside triphosphates other than ATP. The ATP gamma phosphate is transferred to the NDP beta phosphate via a ping-pong mechanism, using a phosphorylated active-site intermediate. The polypeptide is Nucleoside diphosphate kinase (Mycobacterium bovis (strain ATCC BAA-935 / AF2122/97)).